We begin with the raw amino-acid sequence, 315 residues long: Probable cell division protein WhiA (315 aa).

A DNA-binding region (H-T-H motif) is located at residues 280–313; sequence SLKELGEMLDPPVGKSGINHRLRKIEKIAEELRT.

Belongs to the WhiA family.

Functionally, involved in cell division and chromosome segregation. In Clostridium beijerinckii (strain ATCC 51743 / NCIMB 8052) (Clostridium acetobutylicum), this protein is Probable cell division protein WhiA.